A 504-amino-acid chain; its full sequence is Maturase K (504 aa).

Belongs to the intron maturase 2 family. MatK subfamily.

It is found in the plastid. The protein localises to the chloroplast. In terms of biological role, usually encoded in the trnK tRNA gene intron. Probably assists in splicing its own and other chloroplast group II introns. The chain is Maturase K from Erythrina crista-galli (Cockspur coral tree).